The primary structure comprises 762 residues: Endonuclease MutS2 (762 aa).

Position 329 to 336 (329 to 336) interacts with ATP; the sequence is GPNTGGKT. In terms of domain architecture, Smr spans 682–757; the sequence is LNLIGKDVET…GSGVTVVYLE (76 aa).

Belongs to the DNA mismatch repair MutS family. MutS2 subfamily. In terms of assembly, homodimer. Binds to stalled ribosomes, contacting rRNA.

Functionally, endonuclease that is involved in the suppression of homologous recombination and thus may have a key role in the control of bacterial genetic diversity. Acts as a ribosome collision sensor, splitting the ribosome into its 2 subunits. Detects stalled/collided 70S ribosomes which it binds and splits by an ATP-hydrolysis driven conformational change. Acts upstream of the ribosome quality control system (RQC), a ribosome-associated complex that mediates the extraction of incompletely synthesized nascent chains from stalled ribosomes and their subsequent degradation. Probably generates substrates for RQC. In Aquifex aeolicus (strain VF5), this protein is Endonuclease MutS2.